A 564-amino-acid polypeptide reads, in one-letter code: Type 2 DNA topoisomerase 6 subunit B (564 aa).

Residues Asn-46, Asp-78, 99-100, 109-116, and Lys-471 contribute to the ATP site; these read TK and GQQGIGIS.

Belongs to the TOP6B family. In terms of assembly, homodimer. Heterotetramer of two Top6A and two Top6B chains.

The enzyme catalyses ATP-dependent breakage, passage and rejoining of double-stranded DNA.. In terms of biological role, relaxes both positive and negative superturns and exhibits a strong decatenase activity. The polypeptide is Type 2 DNA topoisomerase 6 subunit B (Pyrococcus abyssi (strain GE5 / Orsay)).